The sequence spans 258 residues: Ribonuclease PH (258 aa).

Phosphate-binding positions include R88 and 126–128 (GTR).

This sequence belongs to the RNase PH family. In terms of assembly, homohexameric ring arranged as a trimer of dimers.

The catalysed reaction is tRNA(n+1) + phosphate = tRNA(n) + a ribonucleoside 5'-diphosphate. In terms of biological role, phosphorolytic 3'-5' exoribonuclease that plays an important role in tRNA 3'-end maturation. Removes nucleotide residues following the 3'-CCA terminus of tRNAs; can also add nucleotides to the ends of RNA molecules by using nucleoside diphosphates as substrates, but this may not be physiologically important. Probably plays a role in initiation of 16S rRNA degradation (leading to ribosome degradation) during starvation. The chain is Ribonuclease PH from Mycobacteroides abscessus (strain ATCC 19977 / DSM 44196 / CCUG 20993 / CIP 104536 / JCM 13569 / NCTC 13031 / TMC 1543 / L948) (Mycobacterium abscessus).